The following is a 441-amino-acid chain: DILAAFRVTPQPGVPPEEAGAAVAAESSTGTWTTVWTDGLTSLDRYKGRCYHIEPVAGEESQFIAYVAYPLDLFEEGSVTNMFTSIVGNVFGFKALRALRLEDLRIPPAYVKTFQGPPHGIQVERDKLNKYGRPLLGCTIKPKLGLSAKNYGRAVYECLRGGLDFTKDDENVNSQPFMRWRDRFLFCAEALYKAQAETGEIKGHYLNATAGTCEEMIKRAVFARELGVPIVMHDYLTGGFTANTSLAHYCRDNGLLLHIHRAMHAVIDRQKNHGIHFRVLAKALRMSGGDHIHSGTVVGKLEGEREITLGFVDLLRDDFIEKDRSRGIYFTQDWVSLPGVLPVASGGIHVWHMPALTEIFGDDSVLQFGGGTLGHPWGNAPGAVANRVALEACVQARNEGRDLAREGNEIIREASKWSPELAAACEVWKEIKFEFEAMDTL.

Substrate is bound by residues asparagine 89 and threonine 139. Lysine 141 (proton acceptor) is an active-site residue. Lysine 143 lines the substrate pocket. Mg(2+) is bound by residues lysine 167, aspartate 169, and glutamate 170. Residue lysine 167 is modified to N6-carboxylysine. Histidine 260 acts as the Proton acceptor in catalysis. Substrate is bound by residues arginine 261, histidine 293, and serine 345.

It belongs to the RuBisCO large chain family. Type I subfamily. As to quaternary structure, heterohexadecamer of 8 large chains and 8 small chains; disulfide-linked. The disulfide link is formed within the large subunit homodimers. Mg(2+) serves as cofactor. In terms of processing, the disulfide bond which can form in the large chain dimeric partners within the hexadecamer appears to be associated with oxidative stress and protein turnover.

Its subcellular location is the plastid. The protein resides in the chloroplast. The enzyme catalyses 2 (2R)-3-phosphoglycerate + 2 H(+) = D-ribulose 1,5-bisphosphate + CO2 + H2O. The catalysed reaction is D-ribulose 1,5-bisphosphate + O2 = 2-phosphoglycolate + (2R)-3-phosphoglycerate + 2 H(+). RuBisCO catalyzes two reactions: the carboxylation of D-ribulose 1,5-bisphosphate, the primary event in carbon dioxide fixation, as well as the oxidative fragmentation of the pentose substrate in the photorespiration process. Both reactions occur simultaneously and in competition at the same active site. In Polemonium reptans (Greek valerian), this protein is Ribulose bisphosphate carboxylase large chain.